We begin with the raw amino-acid sequence, 408 residues long: Putative glutamate--cysteine ligase 2 (408 aa).

Belongs to the glutamate--cysteine ligase type 2 family. YbdK subfamily.

The catalysed reaction is L-cysteine + L-glutamate + ATP = gamma-L-glutamyl-L-cysteine + ADP + phosphate + H(+). Its function is as follows. ATP-dependent carboxylate-amine ligase which exhibits weak glutamate--cysteine ligase activity. This is Putative glutamate--cysteine ligase 2 from Bradyrhizobium sp. (strain ORS 278).